A 514-amino-acid polypeptide reads, in one-letter code: ATP synthase subunit alpha (514 aa).

170-177 (GDRQTGKT) lines the ATP pocket.

The protein belongs to the ATPase alpha/beta chains family. As to quaternary structure, F-type ATPases have 2 components, CF(1) - the catalytic core - and CF(0) - the membrane proton channel. CF(1) has five subunits: alpha(3), beta(3), gamma(1), delta(1), epsilon(1). CF(0) has three main subunits: a(1), b(2) and c(9-12). The alpha and beta chains form an alternating ring which encloses part of the gamma chain. CF(1) is attached to CF(0) by a central stalk formed by the gamma and epsilon chains, while a peripheral stalk is formed by the delta and b chains.

It localises to the cell inner membrane. The catalysed reaction is ATP + H2O + 4 H(+)(in) = ADP + phosphate + 5 H(+)(out). Functionally, produces ATP from ADP in the presence of a proton gradient across the membrane. The alpha chain is a regulatory subunit. This chain is ATP synthase subunit alpha, found in Psychrobacter cryohalolentis (strain ATCC BAA-1226 / DSM 17306 / VKM B-2378 / K5).